A 135-amino-acid chain; its full sequence is Helix-loop-helix protein 2 (135 aa).

The segment at 1–81 is disordered; the sequence is MMLSPDQAAD…RRATAKYRSA (81 aa). Over residues 10–21 the composition is skewed to basic and acidic residues; the sequence is DSDHPSSTHSDP. Positions 68–81 are enriched in basic residues; sequence KRRRRRATAKYRSA. Positions 77 to 129 constitute a bHLH domain; that stretch reads KYRSAHATRERIRVEAFNLAFAELRKLLPTLPPDKKLSKIEILRLAICYISYL.

In terms of assembly, homodimer. Interacts and may form heterodimers with STAT3. In terms of tissue distribution, expressed in developing neurons. Transiently expressed in the cerebellum during postnatal development, exclusively in the premigratory zone of the external granule layer where postmitotic neurons undergo initial stages of neuronal differentiation. Expression is not detected in mature neurons. Expressed in the anterior lobe of the adult pituitary.

It is found in the nucleus. In terms of biological role, transcription factor which binds the E box motif 5'-CA[TC][AG]TG-3'. Involved in regulating energy expenditure, body mass, voluntary physical activity, mating behavior and reproductive longevity, acting through the hypothalamic-pituitary-gonadal axis. Acts as a transcriptional activator of target genes, including Ndn, Pcsk1, Mc4r. Is also a transcriptional activator of KISS1. May act centrally to regulate function of both white and brown adipose tissue. Together with NHLH1, required to maintain migration and survival of cells in the anterior extramural migration stream (aes), which forms the precerebellar nuclei. Also, in concert with Nhlh1, may determine fate of gonadotropin releasing hormone-1 (GnRH-1) neurons. The protein is Helix-loop-helix protein 2 (Nhlh2) of Mus musculus (Mouse).